The sequence spans 291 residues: Tryptophan 2,3-dioxygenase (291 aa).

Substrate is bound by residues 51-55 (FIIQH), Y113, and R117. Heme is bound at residue H240. T254 is a substrate binding site.

The protein belongs to the tryptophan 2,3-dioxygenase family. Homotetramer. The cofactor is heme.

The enzyme catalyses L-tryptophan + O2 = N-formyl-L-kynurenine. The protein operates within amino-acid degradation; L-tryptophan degradation via kynurenine pathway; L-kynurenine from L-tryptophan: step 1/2. Functionally, heme-dependent dioxygenase that catalyzes the oxidative cleavage of the L-tryptophan (L-Trp) pyrrole ring and converts L-tryptophan to N-formyl-L-kynurenine. Catalyzes the oxidative cleavage of the indole moiety. The protein is Tryptophan 2,3-dioxygenase of Myxococcus xanthus (strain DK1622).